A 179-amino-acid polypeptide reads, in one-letter code: MTRLEKIYREKVVPVMQKEFSYSSSMQLPGIEKISLNIGLGAASQNNKLMEEAVAELSAIAGQKAVVTRAKKSIAAFKLREGMPIGARVTLRRDRMWDFLDKLMNFALPRVRDFRGIPDRGFDGRGNFTLGIKEHTIFPELEVDRVENPKGMNITIVTTAATDKEGKFLLDQLGMPFRK.

It belongs to the universal ribosomal protein uL5 family. As to quaternary structure, part of the 50S ribosomal subunit; part of the 5S rRNA/L5/L18/L25 subcomplex. Contacts the 5S rRNA and the P site tRNA. Forms a bridge to the 30S subunit in the 70S ribosome.

In terms of biological role, this is one of the proteins that bind and probably mediate the attachment of the 5S RNA into the large ribosomal subunit, where it forms part of the central protuberance. In the 70S ribosome it contacts protein S13 of the 30S subunit (bridge B1b), connecting the 2 subunits; this bridge is implicated in subunit movement. Contacts the P site tRNA; the 5S rRNA and some of its associated proteins might help stabilize positioning of ribosome-bound tRNAs. The sequence is that of Large ribosomal subunit protein uL5 from Desulfovibrio desulfuricans (strain ATCC 27774 / DSM 6949 / MB).